The chain runs to 89 residues: Small ribosomal subunit protein uS14A (89 aa).

It belongs to the universal ribosomal protein uS14 family. In terms of assembly, part of the 30S ribosomal subunit. Contacts proteins S3 and S10.

Its function is as follows. Binds 16S rRNA, required for the assembly of 30S particles and may also be responsible for determining the conformation of the 16S rRNA at the A site. The sequence is that of Small ribosomal subunit protein uS14A from Staphylococcus aureus (strain MRSA252).